A 447-amino-acid polypeptide reads, in one-letter code: Phosphatidylinositol 4-kinase type 2-alpha (447 aa).

The segment at Met1–Glu77 is disordered. Residues Arg48–Glu77 show a composition bias toward basic and acidic residues. Positions Gly92–Thr421 constitute a PI3K/PI4K catalytic domain. Residues Ile98–Gly104 are G-loop. ATP contacts are provided by residues Tyr99–Ser105 and Lys120. The tract at residues Glu125–Tyr127 is important for substrate binding. The tract at residues Lys133–Cys146 is important for interaction with membranes. S-palmitoyl cysteine attachment occurs at residues Cys142, Cys143, Cys145, and Cys146. An ATP-binding site is contributed by Gln229 to Val232. Residues Lys236 to Arg244 are important for interaction with membranes. The interval Arg273–Asn281 is catalytic loop. The interval Ala312 to Phe332 is activation loop. An ATP-binding site is contributed by Asp314. The segment at Trp327–Trp336 is important for interaction with membranes.

It belongs to the PI3/PI4-kinase family. Type II PI4K subfamily.

Its subcellular location is the golgi apparatus. The protein localises to the trans-Golgi network membrane. It localises to the membrane raft. It is found in the endosome. The protein resides in the cytoplasmic vesicle. Its subcellular location is the cell projection. The protein localises to the dendrite. It localises to the presynaptic cell membrane. It is found in the synapse. The protein resides in the synaptosome. Its subcellular location is the mitochondrion. The protein localises to the membrane. It localises to the cell membrane. It is found in the perikaryon. The protein resides in the neuron projection. It catalyses the reaction a 1,2-diacyl-sn-glycero-3-phospho-(1D-myo-inositol) + ATP = a 1,2-diacyl-sn-glycero-3-phospho-(1D-myo-inositol 4-phosphate) + ADP + H(+). Membrane-bound phosphatidylinositol-4 kinase (PI4-kinase) that catalyzes the phosphorylation of phosphatidylinositol (PI) to phosphatidylinositol 4-phosphate (PI4P), a lipid that plays important roles in endocytosis, Golgi function, protein sorting and membrane trafficking. Besides, phosphorylation of phosphatidylinositol (PI) to phosphatidylinositol 4-phosphate (PI4P) is the first committed step in the generation of phosphatidylinositol 4,5-bisphosphate (PIP2), a precursor of the second messenger inositol 1,4,5-trisphosphate (InsP3). The chain is Phosphatidylinositol 4-kinase type 2-alpha (pi4k2a) from Danio rerio (Zebrafish).